The chain runs to 163 residues: Succinate dehydrogenase assembly factor 2, mitochondrial (163 aa).

The protein belongs to the SDHAF2 family. As to quaternary structure, interacts with the flavoprotein subunit within the SDH catalytic dimer.

It is found in the mitochondrion matrix. Plays an essential role in the assembly of succinate dehydrogenase (SDH), an enzyme complex (also referred to as respiratory complex II) that is a component of both the tricarboxylic acid (TCA) cycle and the mitochondrial electron transport chain, and which couples the oxidation of succinate to fumarate with the reduction of ubiquinone (coenzyme Q) to ubiquinol. Required for flavinylation (covalent attachment of FAD) of the flavoprotein subunit of the SDH catalytic dimer. The protein is Succinate dehydrogenase assembly factor 2, mitochondrial of Kluyveromyces lactis (strain ATCC 8585 / CBS 2359 / DSM 70799 / NBRC 1267 / NRRL Y-1140 / WM37) (Yeast).